The chain runs to 190 residues: Lipid A acyltransferase PagP (190 aa).

The signal sequence occupies residues 1-29 (MYVAMIIRKYFLIIALLLMPWLAIPSVSA). Residues H62, D105, and S106 contribute to the active site.

It belongs to the lipid A palmitoyltransferase family. As to quaternary structure, homodimer.

The protein localises to the cell outer membrane. It catalyses the reaction a lipid A + a 1,2-diacyl-sn-glycero-3-phosphocholine = a hepta-acyl lipid A + a 2-acyl-sn-glycero-3-phosphocholine. The catalysed reaction is a lipid IVA + a 1,2-diacyl-sn-glycero-3-phosphocholine = a lipid IVB + a 2-acyl-sn-glycero-3-phosphocholine. The enzyme catalyses a lipid IIA + a 1,2-diacyl-sn-glycero-3-phosphocholine = a lipid IIB + a 2-acyl-sn-glycero-3-phosphocholine. In terms of biological role, transfers a fatty acid residue from the sn-1 position of a phospholipid to the N-linked hydroxyfatty acid chain on the proximal unit of lipid A or its precursors. Required for resistance to cationic antimicrobial peptides (CAMPs). Modifications of lipid A with an acyl chain allow to evade host immune defenses by resisting antimicrobial peptides and attenuating the inflammatory response to infection triggered by lipopolysaccharide through the Toll-like receptor 4 (TLR4) signal transduction pathway. The sequence is that of Lipid A acyltransferase PagP from Salmonella typhimurium (strain LT2 / SGSC1412 / ATCC 700720).